We begin with the raw amino-acid sequence, 358 residues long: Protein phosphatase 1 regulatory subunit 3G (358 aa).

The disordered stretch occupies residues 1–71; sequence MEPIGARLSL…KEEAAPQEQE (71 aa). Residues 11–29 show a composition bias toward low complexity; that stretch reads EAPGPAPFREAPPAEELPA. S86 carries the post-translational modification Phosphoserine. One can recognise a CBM21 domain in the interval 210–350; sequence AERLQRQRVC…NNAGANYTLR (141 aa). Residues 270–280 are compositionally biased toward low complexity; sequence EPLEPQQPEAP. Residues 270–295 form a disordered region; the sequence is EPLEPQQPEAPSGASEPGSGDAKKEP.

In terms of biological role, glycogen-targeting subunit for protein phosphatase 1 (PP1). Involved in the regulation of hepatic glycogenesis in a manner coupled to the fasting-feeding cycle and distinct from other glycogen-targeting subunits. The sequence is that of Protein phosphatase 1 regulatory subunit 3G (PPP1R3G) from Homo sapiens (Human).